The following is a 96-amino-acid chain: Co-chaperonin GroES (96 aa).

The protein belongs to the GroES chaperonin family. In terms of assembly, heptamer of 7 subunits arranged in a ring. Interacts with the chaperonin GroEL.

The protein localises to the cytoplasm. In terms of biological role, together with the chaperonin GroEL, plays an essential role in assisting protein folding. The GroEL-GroES system forms a nano-cage that allows encapsulation of the non-native substrate proteins and provides a physical environment optimized to promote and accelerate protein folding. GroES binds to the apical surface of the GroEL ring, thereby capping the opening of the GroEL channel. This chain is Co-chaperonin GroES, found in Haemophilus influenzae (strain 86-028NP).